The primary structure comprises 698 residues: Zinc finger CCCH domain-containing protein 7 (698 aa).

Positions 1–11 are enriched in pro residues; that stretch reads MEEPSPVPPAA. 4 disordered regions span residues 1 to 23, 56 to 95, 109 to 137, and 272 to 300; these read MEEPSPVPPAAAPASLAAAPPTT, HAARPDAEVEPAAAAAIPPGGSGGLPHGDSPPPADVGGDR, APHETPSTSASPDAAVNPTTDPGVVPQGT, and GSLDGGGGFEEGEIEGDTQNLDADDSGNS. Low complexity-rich tracts occupy residues 12–21 and 65–74; these read APASLAAAPP and EPAAAAAIPP. Residues 281–300 are compositionally biased toward acidic residues; sequence EEGEIEGDTQNLDADDSGNS. C3H1-type zinc fingers lie at residues 429-456, 458-485, and 486-511; these read PKVVKVCHFYLHGKCQQGNLCKFSHDTT, LTKSKPCTHYARGSCLKGDDCPYDHELS, and KYPCHNFMENGMCIRGDKCKFSHVIP. Disordered stretches follow at residues 512–553 and 607–682; these read TAEG…GEPA and TEKH…QHEV. Polar residues-rich tracts occupy residues 535–548 and 665–680; these read CQEQTSRQKTSTVY and SLPTTAAVPSSVSTQH.

The sequence is that of Zinc finger CCCH domain-containing protein 7 from Oryza sativa subsp. japonica (Rice).